The chain runs to 456 residues: Chromosomal replication initiator protein DnaA (456 aa).

Residues 1 to 85 form a domain I, interacts with DnaA modulators region; sequence MDADLNKLWE…EIKFIIESDL (85 aa). The segment at 85-117 is domain II; the sequence is LNNEDELNNSDNSDKNRDKNSRRNIVVNDEMSS. Positions 118–334 are domain III, AAA+ region; sequence TLNPKYTFNS…GALIRIIAYS (217 aa). ATP contacts are provided by Gly162, Gly164, Lys165, and Thr166. The domain IV, binds dsDNA stretch occupies residues 335–456; it reads SLTNREVTVD…SDITKKVSQN (122 aa).

This sequence belongs to the DnaA family. In terms of assembly, oligomerizes as a right-handed, spiral filament on DNA at oriC.

It localises to the cytoplasm. Functionally, plays an essential role in the initiation and regulation of chromosomal replication. ATP-DnaA binds to the origin of replication (oriC) to initiate formation of the DNA replication initiation complex once per cell cycle. Binds the DnaA box (a 9 base pair repeat at the origin) and separates the double-stranded (ds)DNA. Forms a right-handed helical filament on oriC DNA; dsDNA binds to the exterior of the filament while single-stranded (ss)DNA is stabiized in the filament's interior. The ATP-DnaA-oriC complex binds and stabilizes one strand of the AT-rich DNA unwinding element (DUE), permitting loading of DNA polymerase. After initiation quickly degrades to an ADP-DnaA complex that is not apt for DNA replication. Binds acidic phospholipids. In Clostridium botulinum (strain Eklund 17B / Type B), this protein is Chromosomal replication initiator protein DnaA.